A 356-amino-acid polypeptide reads, in one-letter code: MQSGEESRLGIKCASLHEELTQIVIDQDVGPLQRVPASEFLARLVEHMGQTIPREVFGAEAETGTRDLERLGAIVAYIDENFAAQNVLPFTIQRICELCYHPLHYFRVGELRKFVNALEKVCYVRSSWSAGYGAVPSPAEGTPTREASVDVSMSKIPWLPDDGGRDLRQFIEKIESIVSVNFGYEDDEDEGRDAAIQEYYDNEGAGDDEDDDQDYVDEDSATSEDEEEDVEEEEEEEGPEPEVGLEPVHAESAPEECVGTNKRTTAEREDCHMQPCAAAHSTDGAHPCGLKRSKLQEDGATMASPPDIVAEGGSHDPQVVDASKPPQLTTSATNVSCNASIEATVSLDDDSTAGGE.

Over residues 202 to 240 the composition is skewed to acidic residues; it reads NEGAGDDEDDDQDYVDEDSATSEDEEEDVEEEEEEEGPE. The interval 202 to 335 is disordered; it reads NEGAGDDEDD…PQLTTSATNV (134 aa). Positions 326 to 335 are enriched in polar residues; sequence PQLTTSATNV.

This sequence belongs to the PPP4R2 family. In terms of assembly, regulatory subunit (R2) of the histone H2A phosphatase complex (HTP-C) consisting of PPH3, PSY2 and PSY4.

The protein resides in the nucleus. In terms of biological role, regulatory subunit of the histone H2A phosphatase complex, which dephosphorylates H2AS128ph (gamma-H2A) that has been displaced from sites of DNA lesions in the double-stranded DNA break repair process. Dephosphorylation is necessary for efficient recovery from the DNA damage checkpoint. This Eremothecium gossypii (strain ATCC 10895 / CBS 109.51 / FGSC 9923 / NRRL Y-1056) (Yeast) protein is Serine/threonine-protein phosphatase 4 regulatory subunit 2 (PSY4).